The chain runs to 231 residues: 5'-methylthioadenosine/S-adenosylhomocysteine nucleosidase (231 aa).

Glu12 functions as the Proton acceptor in the catalytic mechanism. Substrate-binding positions include Gly78, Met153, and 174 to 175 (ME). The Proton donor role is filled by Asp198.

This sequence belongs to the PNP/UDP phosphorylase family. MtnN subfamily.

It catalyses the reaction S-adenosyl-L-homocysteine + H2O = S-(5-deoxy-D-ribos-5-yl)-L-homocysteine + adenine. It carries out the reaction S-methyl-5'-thioadenosine + H2O = 5-(methylsulfanyl)-D-ribose + adenine. The catalysed reaction is 5'-deoxyadenosine + H2O = 5-deoxy-D-ribose + adenine. The protein operates within amino-acid biosynthesis; L-methionine biosynthesis via salvage pathway; S-methyl-5-thio-alpha-D-ribose 1-phosphate from S-methyl-5'-thioadenosine (hydrolase route): step 1/2. Its function is as follows. Catalyzes the irreversible cleavage of the glycosidic bond in both 5'-methylthioadenosine (MTA) and S-adenosylhomocysteine (SAH/AdoHcy) to adenine and the corresponding thioribose, 5'-methylthioribose and S-ribosylhomocysteine, respectively. Also cleaves 5'-deoxyadenosine, a toxic by-product of radical S-adenosylmethionine (SAM) enzymes, into 5-deoxyribose and adenine. The polypeptide is 5'-methylthioadenosine/S-adenosylhomocysteine nucleosidase (Bacillus anthracis (strain A0248)).